A 256-amino-acid chain; its full sequence is Indole-3-glycerol phosphate synthase (256 aa).

This sequence belongs to the TrpC family.

The enzyme catalyses 1-(2-carboxyphenylamino)-1-deoxy-D-ribulose 5-phosphate + H(+) = (1S,2R)-1-C-(indol-3-yl)glycerol 3-phosphate + CO2 + H2O. It functions in the pathway amino-acid biosynthesis; L-tryptophan biosynthesis; L-tryptophan from chorismate: step 4/5. This chain is Indole-3-glycerol phosphate synthase, found in Pelodictyon phaeoclathratiforme (strain DSM 5477 / BU-1).